The chain runs to 483 residues: Serine/threonine-protein kinase BSK4 (483 aa).

Gly2 is lipidated: N-myristoyl glycine. Residues 56–322 form the Protein kinase domain; it reads ENVVSEHGET…DTEVLSHVLM (267 aa). Residues 62 to 70 and Lys84 each bind ATP; that span reads HGETAPNVV. The active-site Proton acceptor is the Asp178.

Belongs to the protein kinase superfamily. Ser/Thr protein kinase family.

It is found in the cell membrane. It catalyses the reaction L-seryl-[protein] + ATP = O-phospho-L-seryl-[protein] + ADP + H(+). The enzyme catalyses L-threonyl-[protein] + ATP = O-phospho-L-threonyl-[protein] + ADP + H(+). Probable serine/threonine kinase that acts as a positive regulator of brassinosteroid (BR) signaling downstream of the receptor kinase BRI1. Functions redundantly with BSK3, BSK6, BSK7 and BSK8. The protein is Serine/threonine-protein kinase BSK4 of Arabidopsis thaliana (Mouse-ear cress).